Consider the following 687-residue polypeptide: C-mannosyltransferase dpy-19 (687 aa).

Transmembrane regions (helical) follow at residues 24 to 44, 170 to 190, 191 to 211, 223 to 243, 253 to 273, 276 to 296, 303 to 323, 324 to 344, 347 to 367, 415 to 435, and 454 to 474; these read GISG…VGFL, ITGV…LGVL, VSDS…NHGE, ESFA…IIKY, LLIS…FAFF, ICSI…AKTI, AFFI…ALYF, PSIW…GIRL, LYLL…KVGF, LSST…SWDF, and GEVI…VLIM.

It belongs to the dpy-19 family.

It is found in the endoplasmic reticulum membrane. C-mannosyltransferase that mediates C-mannosylation of tryptophan residues on target proteins such as unc-5 and mig-21. Mediates the attachment of alpha-mannose in C-C linkage to the C2 of the indole ring of tryptophan. C-mannosylation takes place in the endoplasmic reticulum and frequently found in thrombospondin (TSP) type-1 repeats and in the WSXWS motif of type I cytokine receptors. Required to orient neuroblasts QL and QR correctly on the anterior/posterior (A/P) axis: QL and QR are born in the same A/P position, but polarize and migrate left/right asymmetrically, QL migrates toward the posterior and QR migrates toward the anterior. Required with unc-40 to express mab-5 correctly in the Q cell descendants. The sequence is that of C-mannosyltransferase dpy-19 from Caenorhabditis briggsae.